A 310-amino-acid polypeptide reads, in one-letter code: ADP-L-glycero-D-manno-heptose-6-epimerase (310 aa).

NADP(+)-binding positions include 10–11, 31–32, Lys38, Lys53, 75–79, and Asn92; these read FI, DN, and EGACS. Residue Tyr140 is the Proton acceptor of the active site. Residue Lys144 participates in NADP(+) binding. A substrate-binding site is contributed by Asn169. 2 residues coordinate NADP(+): Val170 and Lys178. Lys178 (proton acceptor) is an active-site residue. Substrate is bound by residues Ser180, His187, 201-204, and Arg209; that span reads FEGS. At Lys267 the chain carries N6-acetyllysine. Tyr272 provides a ligand contact to substrate.

The protein belongs to the NAD(P)-dependent epimerase/dehydratase family. HldD subfamily. In terms of assembly, homopentamer. The cofactor is NADP(+).

The catalysed reaction is ADP-D-glycero-beta-D-manno-heptose = ADP-L-glycero-beta-D-manno-heptose. The protein operates within nucleotide-sugar biosynthesis; ADP-L-glycero-beta-D-manno-heptose biosynthesis; ADP-L-glycero-beta-D-manno-heptose from D-glycero-beta-D-manno-heptose 7-phosphate: step 4/4. Functionally, catalyzes the interconversion between ADP-D-glycero-beta-D-manno-heptose and ADP-L-glycero-beta-D-manno-heptose via an epimerization at carbon 6 of the heptose. The sequence is that of ADP-L-glycero-D-manno-heptose-6-epimerase from Escherichia coli (strain SMS-3-5 / SECEC).